A 269-amino-acid polypeptide reads, in one-letter code: Diaminopimelate epimerase (269 aa).

Substrate contacts are provided by N15, Q49, and N66. Catalysis depends on C75, which acts as the Proton donor. Substrate contacts are provided by residues 76–77 (GN), N155, N187, and 204–205 (ER). Residue C213 is the Proton acceptor of the active site. Residue 214–215 (GS) coordinates substrate.

It belongs to the diaminopimelate epimerase family. As to quaternary structure, homodimer.

Its subcellular location is the cytoplasm. It carries out the reaction (2S,6S)-2,6-diaminopimelate = meso-2,6-diaminopimelate. The protein operates within amino-acid biosynthesis; L-lysine biosynthesis via DAP pathway; DL-2,6-diaminopimelate from LL-2,6-diaminopimelate: step 1/1. Functionally, catalyzes the stereoinversion of LL-2,6-diaminopimelate (L,L-DAP) to meso-diaminopimelate (meso-DAP), a precursor of L-lysine and an essential component of the bacterial peptidoglycan. This is Diaminopimelate epimerase from Rickettsia bellii (strain OSU 85-389).